The chain runs to 282 residues: Tyrosine recombinase XerA (282 aa).

The region spanning 2–79 (SEPNEVIEEF…ALRAYFRFEG (78 aa)) is the Core-binding (CB) domain. The region spanning 95–271 (SLPKALTREE…TVEHLRKAQE (177 aa)) is the Tyr recombinase domain. Residues arginine 132, lysine 157, histidine 223, arginine 226, and histidine 249 contribute to the active site. Tyrosine 258 functions as the O-(3'-phospho-DNA)-tyrosine intermediate in the catalytic mechanism.

This sequence belongs to the 'phage' integrase family. XerA subfamily.

The protein localises to the cytoplasm. Functionally, site-specific tyrosine recombinase, which acts by catalyzing the cutting and rejoining of the recombining DNA molecules. This is Tyrosine recombinase XerA from Thermococcus kodakarensis (strain ATCC BAA-918 / JCM 12380 / KOD1) (Pyrococcus kodakaraensis (strain KOD1)).